The chain runs to 527 residues: MPSLSQSRRIIQQSSIRKIWNQIDTSPKHGVCVPLFSLYTQESCGIGEFLDLIPMIDWCISCGFQILQILPINDTGSCSSPYNSISSIALNPLHLSISALPYKEEVPAAETRIREMQQLSQLPQVHYEKVRSMKRDFFQEYYRVCKQKKLTDHPDFYAFCEQEKYWLHPYALFRSIREHLDNLPINHWPTTYTDLSQITEHERTFAEDIQFHSYLQYLCFQQMTQVREHANCKSCLIKGDIPILISKDSCDVWFYRHYFSSSESVGAPPDLYNAEGQNWHLPICNMKTLQQDNYLWWKERLRYAENFYSLYRLDHVVGLFRFWVWDESGCGRFEPHDPKNYLAQGQDILSHLLTSSSMLPIGEDLGTIPSDVKRMLESFAVCGTRIPRWERNWEGNGAYTPFDQYDPLSVTSLSTHDSSTLASWWKESPQESKLFAQFLGLPYSSTLSLHNHTEILKLSHKTSSIFRINLINDYLALFPDLISKTPRYERINLPGTISKNNWVYRVKPSIEDLSSHSKLNSLLEALF.

It belongs to the disproportionating enzyme family.

Its subcellular location is the cytoplasm. It carries out the reaction Transfers a segment of a (1-&gt;4)-alpha-D-glucan to a new position in an acceptor, which may be glucose or a (1-&gt;4)-alpha-D-glucan.. The polypeptide is 4-alpha-glucanotransferase (malQ) (Chlamydia trachomatis serovar D (strain ATCC VR-885 / DSM 19411 / UW-3/Cx)).